Consider the following 192-residue polypeptide: Thymidine kinase (192 aa).

ATP contacts are provided by residues 9–16 (SAMNAGKS) and 87–90 (DECQ). Catalysis depends on glutamate 88, which acts as the Proton acceptor. Zn(2+) is bound by residues cysteine 145, cysteine 147, cysteine 182, and histidine 185.

This sequence belongs to the thymidine kinase family. Homotetramer.

It localises to the cytoplasm. It catalyses the reaction thymidine + ATP = dTMP + ADP + H(+). The sequence is that of Thymidine kinase from Vibrio parahaemolyticus serotype O3:K6 (strain RIMD 2210633).